The following is a 579-amino-acid chain: Putative truncated flagellar export/assembly protein LfhA (579 aa).

3 helical membrane-spanning segments follow: residues 86 to 106, 124 to 144, and 177 to 197; these read AIAG…IGIF, IGDG…AAII, and FVLA…SALL.

The protein belongs to the FHIPEP (flagella/HR/invasion proteins export pore) family.

It localises to the cell inner membrane. In Escherichia coli (strain K12), this protein is Putative truncated flagellar export/assembly protein LfhA.